The chain runs to 177 residues: Protein-export protein SecB (177 aa).

This sequence belongs to the SecB family. Homotetramer, a dimer of dimers. One homotetramer interacts with 1 SecA dimer.

It localises to the cytoplasm. Its function is as follows. One of the proteins required for the normal export of preproteins out of the cell cytoplasm. It is a molecular chaperone that binds to a subset of precursor proteins, maintaining them in a translocation-competent state. It also specifically binds to its receptor SecA. This chain is Protein-export protein SecB, found in Ehrlichia canis (strain Jake).